The primary structure comprises 303 residues: GPN-loop GTPase 2 (303 aa).

Residue 29–34 coordinates GTP; sequence GSGKST. Positions 85 to 87 match the Gly-Pro-Asn (GPN)-loop; involved in dimer interface motif; the sequence is GPN. GTP is bound at residue 187-190; sequence SKMD.

The protein belongs to the GPN-loop GTPase family. In terms of assembly, heterodimers with gpn1 or gpn3. Binds to RNA polymerase II (RNAPII).

Its function is as follows. Small GTPase required for proper localization of RNA polymerase II and III (RNAPII and RNAPIII). May act at an RNAP assembly step prior to nuclear import. The protein is GPN-loop GTPase 2 of Xenopus tropicalis (Western clawed frog).